Reading from the N-terminus, the 417-residue chain is MQLYALGLNHHTAPLAIRERVAFQPDRLDQALQALTDSRTVSEAAILSTCNRTELYFAAEQPQRAADWLAGFHQLPLAQVSPYLYSYPQRDAVRHVFRVASGLDSMVLGEPQILGQVKEAARRAEEAGTLGTLLHKLFQNTFAVAKEVRSTTAIGANIVSMAAAAVHLTGRIFERVSDQHVLFIGAGEMIELCAAHFAGAGPRSMTVANRTEARAEALAARLGAQTMRLDAIADALPRFDVVVSCTASPLPIVGLGMVERAVKVRRHRPIVMVDLAVPRDVEPEVGQLDDVFLYTVDDLAQVVDAGIESRQQAVVEAEGIIDQRVDGFLHWLHARDAVPTIRALREHAETLRRGEIERALRQLAKGEDPQAVLDALSHGLTNKLMHGPTRFLTQAEGEGQAEASRVVQQLFNLSRHD.

Residues 49 to 52 (TCNR), Ser105, 110 to 112 (EPQ), and Gln116 contribute to the substrate site. The Nucleophile role is filled by Cys50. 185–190 (GAGEMI) is a binding site for NADP(+).

This sequence belongs to the glutamyl-tRNA reductase family. Homodimer.

It carries out the reaction (S)-4-amino-5-oxopentanoate + tRNA(Glu) + NADP(+) = L-glutamyl-tRNA(Glu) + NADPH + H(+). It functions in the pathway porphyrin-containing compound metabolism; protoporphyrin-IX biosynthesis; 5-aminolevulinate from L-glutamyl-tRNA(Glu): step 1/2. Catalyzes the NADPH-dependent reduction of glutamyl-tRNA(Glu) to glutamate 1-semialdehyde (GSA). The sequence is that of Glutamyl-tRNA reductase from Azoarcus sp. (strain BH72).